The primary structure comprises 354 residues: Ferrochelatase (354 aa).

Fe cation contacts are provided by histidine 214 and glutamate 295.

Belongs to the ferrochelatase family.

Its subcellular location is the cytoplasm. It catalyses the reaction heme b + 2 H(+) = protoporphyrin IX + Fe(2+). It functions in the pathway porphyrin-containing compound metabolism; protoheme biosynthesis; protoheme from protoporphyrin-IX: step 1/1. Functionally, catalyzes the ferrous insertion into protoporphyrin IX. The chain is Ferrochelatase from Burkholderia lata (strain ATCC 17760 / DSM 23089 / LMG 22485 / NCIMB 9086 / R18194 / 383).